Reading from the N-terminus, the 873-residue chain is Alanine--tRNA ligase (873 aa).

Residues H559, H563, C661, and H665 each contribute to the Zn(2+) site.

This sequence belongs to the class-II aminoacyl-tRNA synthetase family. Homotetramer. It depends on Zn(2+) as a cofactor.

The protein localises to the cytoplasm. The catalysed reaction is tRNA(Ala) + L-alanine + ATP = L-alanyl-tRNA(Ala) + AMP + diphosphate. In terms of biological role, catalyzes the attachment of alanine to tRNA(Ala) in a two-step reaction: alanine is first activated by ATP to form Ala-AMP and then transferred to the acceptor end of tRNA(Ala). Also edits incorrectly charged Ser-tRNA(Ala) and Gly-tRNA(Ala) via its editing domain. This Wigglesworthia glossinidia brevipalpis protein is Alanine--tRNA ligase.